The sequence spans 291 residues: 33 kDa chaperonin (291 aa).

Cystine bridges form between cysteine 235/cysteine 237 and cysteine 268/cysteine 271.

It belongs to the HSP33 family. In terms of processing, under oxidizing conditions two disulfide bonds are formed involving the reactive cysteines. Under reducing conditions zinc is bound to the reactive cysteines and the protein is inactive.

It localises to the cytoplasm. Its function is as follows. Redox regulated molecular chaperone. Protects both thermally unfolding and oxidatively damaged proteins from irreversible aggregation. Plays an important role in the bacterial defense system toward oxidative stress. This Streptococcus agalactiae serotype Ia (strain ATCC 27591 / A909 / CDC SS700) protein is 33 kDa chaperonin.